The chain runs to 72 residues: Metallothionein-like protein 1B (72 aa).

The protein belongs to the metallothionein superfamily. Type 15 family. As to expression, expressed in leaves of mature plants.

In terms of biological role, metallothioneins have a high content of cysteine residues that bind various heavy metals. Functions as a metal chelator of nickel (Ni), cadmium (Cd), zinc (Zn) and copper (Cu). Possesses higher affinity for Ni and Cd ions compared to Zn and Cu ions. In Oryza sativa subsp. japonica (Rice), this protein is Metallothionein-like protein 1B (MT1B).